The primary structure comprises 59 residues: Large ribosomal subunit protein uL30 (59 aa).

Belongs to the universal ribosomal protein uL30 family. As to quaternary structure, part of the 50S ribosomal subunit.

This is Large ribosomal subunit protein uL30 from Desulfatibacillum aliphaticivorans.